The sequence spans 100 residues: Small ribosomal subunit protein uS14c (100 aa).

Belongs to the universal ribosomal protein uS14 family. As to quaternary structure, part of the 30S ribosomal subunit.

It is found in the plastid. The protein resides in the chloroplast. Its function is as follows. Binds 16S rRNA, required for the assembly of 30S particles. The polypeptide is Small ribosomal subunit protein uS14c (Trieres chinensis (Marine centric diatom)).